The following is a 478-amino-acid chain: Dynein regulatory complex subunit 4 (478 aa).

Basic residues predominate over residues 1-12 (MAPKKKGKKGKA). Residues 1–33 (MAPKKKGKKGKAKGTPIVDGLAPEDMSKEQVEE) form a disordered region. The segment at 1-114 (MAPKKKGKKG…LLYEHQNNLT (114 aa)) is regulates microtubule-binding. The tract at residues 115–258 (EMKAEGTVVM…NSLKEQMEDM (144 aa)) is microtubule-binding. Residues 242–427 (LNNLALINSL…KDLQYELAQV (186 aa)) are a coiled coil. The interval 357–478 (QQKTGFKNLV…GPAGLVGTPT (122 aa)) is interaction with SMO.

Belongs to the DRC4 family. In terms of assembly, component of the nexin-dynein regulatory complex (N-DRC). Interacts with microtubules. Interacts with SMO. Interacts (via coiled-coil domains) with RAB3B (in GTP-bound form). Interacts with DRC1. Interacts with DRC7. Expressed in respiratory epithelial cells (at protein level). Expressed in the heart, skeletal muscle, pancreas, liver, brain, trachea and lung. Weakly or not expressed in placenta and kidney.

The protein localises to the cytoplasm. It localises to the cytoskeleton. It is found in the cell projection. The protein resides in the cilium. Its subcellular location is the flagellum. The protein localises to the cilium axoneme. It localises to the cilium basal body. It is found in the golgi apparatus. The protein resides in the flagellum axoneme. Functionally, component of the nexin-dynein regulatory complex (N-DRC), a key regulator of ciliary/flagellar motility which maintains the alignment and integrity of the distal axoneme and regulates microtubule sliding in motile axonemes. Plays an important role in the assembly of the N-DRC linker. Plays dual roles at both the primary (or non-motile) cilia to regulate hedgehog signaling and in motile cilia to coordinate cilia movement. Required for proper motile cilia functioning. Positively regulates ciliary smoothened (SMO)-dependent Hedgehog (Hh) signaling pathway by facilitating the trafficking of SMO into the cilium and the stimulation of SMO activity in a GRK2-dependent manner. This chain is Dynein regulatory complex subunit 4 (GAS8), found in Homo sapiens (Human).